Here is an 89-residue protein sequence, read N- to C-terminus: Neuropeptide S (89 aa).

Positions 1-23 (MIGSLKLSFVLALSLSVMHVLWC) are cleaved as a signal peptide. The propeptide occupies 24–69 (YPVLSSKVPGKPDYFLILLSSCPARLEGSDRLAFLKPILEKTSMKR).

It is found in the secreted. Functionally, may play an important anorexigenic role. Modulates arousal and anxiety as well as increases locomotor activity. Binds to its receptor NPSR1 with nanomolar affinity to increase intracellular calcium concentrations. In Mus musculus (Mouse), this protein is Neuropeptide S (Nps).